The primary structure comprises 212 residues: MEYCLAAAALNGVDRRSLQRSARLGREVLERAKRRAVDWHSPERSRGNVGVLYRQGPYQERWSVPGSQRLLGEREERCPTLSSSFGAMAEFMDYTSSQCGKYYLSMPEEGGATHVYRYHRRKPPEMHMYSDTGHSQEQRNCRGETSVGQESIYQTSEHSQESSWPTENISKDLYIEVYPGTYSVTVGSSALSKKTHVVAVDPGQSVDLVFPV.

Interacts with PRKACA and RELA.

Its subcellular location is the nucleus. Functionally, enhances NF-kappa-B transcriptional activity by regulating the nuclear localization of the NF-kappa-B subunit RELA and promoting the phosphorylation of RELA by PRKACA. Regulates the effect of the cAMP-dependent protein kinase signaling pathway on the NF-kappa-B activation cascade. The polypeptide is A-kinase-interacting protein 1 (Akip1) (Mus musculus (Mouse)).